Reading from the N-terminus, the 136-residue chain is Small ribosomal subunit protein uS12 (136 aa).

Asp89 carries the 3-methylthioaspartic acid modification. The tract at residues 104-136 (TAGVNGRTQRRSKYGAKRPKPGQAAAAAKGKKK) is disordered. Basic residues predominate over residues 111 to 123 (TQRRSKYGAKRPK). Residues 124–136 (PGQAAAAAKGKKK) show a composition bias toward low complexity.

Belongs to the universal ribosomal protein uS12 family. In terms of assembly, part of the 30S ribosomal subunit. Contacts proteins S8 and S17. May interact with IF1 in the 30S initiation complex.

In terms of biological role, with S4 and S5 plays an important role in translational accuracy. Its function is as follows. Interacts with and stabilizes bases of the 16S rRNA that are involved in tRNA selection in the A site and with the mRNA backbone. Located at the interface of the 30S and 50S subunits, it traverses the body of the 30S subunit contacting proteins on the other side and probably holding the rRNA structure together. The combined cluster of proteins S8, S12 and S17 appears to hold together the shoulder and platform of the 30S subunit. In Parabacteroides distasonis (strain ATCC 8503 / DSM 20701 / CIP 104284 / JCM 5825 / NCTC 11152), this protein is Small ribosomal subunit protein uS12.